The following is a 194-amino-acid chain: Imidazoleglycerol-phosphate dehydratase (194 aa).

The protein belongs to the imidazoleglycerol-phosphate dehydratase family.

It localises to the cytoplasm. The enzyme catalyses D-erythro-1-(imidazol-4-yl)glycerol 3-phosphate = 3-(imidazol-4-yl)-2-oxopropyl phosphate + H2O. The protein operates within amino-acid biosynthesis; L-histidine biosynthesis; L-histidine from 5-phospho-alpha-D-ribose 1-diphosphate: step 6/9. This is Imidazoleglycerol-phosphate dehydratase from Thermus thermophilus (strain ATCC BAA-163 / DSM 7039 / HB27).